Reading from the N-terminus, the 218-residue chain is Glycerol-3-phosphate acyltransferase (218 aa).

A run of 5 helical transmembrane segments spans residues Ala5–Cys25, Leu53–Ala73, Pro80–Phe100, Ile115–Leu135, and Gly138–Phe158.

This sequence belongs to the PlsY family. Probably interacts with PlsX.

Its subcellular location is the cell inner membrane. The enzyme catalyses an acyl phosphate + sn-glycerol 3-phosphate = a 1-acyl-sn-glycero-3-phosphate + phosphate. The protein operates within lipid metabolism; phospholipid metabolism. Functionally, catalyzes the transfer of an acyl group from acyl-phosphate (acyl-PO(4)) to glycerol-3-phosphate (G3P) to form lysophosphatidic acid (LPA). This enzyme utilizes acyl-phosphate as fatty acyl donor, but not acyl-CoA or acyl-ACP. The sequence is that of Glycerol-3-phosphate acyltransferase from Proteus mirabilis (strain HI4320).